A 176-amino-acid chain; its full sequence is Large ribosomal subunit protein bL17m (176 aa).

The N-terminal 8 residues, 1–8 (MRLSLAAA), are a transit peptide targeting the mitochondrion.

It belongs to the bacterial ribosomal protein bL17 family. In terms of assembly, component of the mitochondrial ribosome large subunit (39S) which comprises a 16S rRNA and about 50 distinct proteins.

It is found in the mitochondrion. The polypeptide is Large ribosomal subunit protein bL17m (Mrpl17) (Mus musculus (Mouse)).